Consider the following 466-residue polypeptide: UDP-N-acetylmuramoylalanine--D-glutamate ligase (466 aa).

117-123 (GTKGKTT) lines the ATP pocket.

It belongs to the MurCDEF family.

It is found in the cytoplasm. The enzyme catalyses UDP-N-acetyl-alpha-D-muramoyl-L-alanine + D-glutamate + ATP = UDP-N-acetyl-alpha-D-muramoyl-L-alanyl-D-glutamate + ADP + phosphate + H(+). Its pathway is cell wall biogenesis; peptidoglycan biosynthesis. Functionally, cell wall formation. Catalyzes the addition of glutamate to the nucleotide precursor UDP-N-acetylmuramoyl-L-alanine (UMA). This chain is UDP-N-acetylmuramoylalanine--D-glutamate ligase, found in Roseiflexus sp. (strain RS-1).